The sequence spans 142 residues: Hemoglobin subunit epsilon (142 aa).

The Globin domain maps to 3 to 142 (HFTAEEKAAI…KLVSAVAIAL (140 aa)). Ser14 and Ser51 each carry phosphoserine. 2 residues coordinate heme b: His64 and His93.

Belongs to the globin family. As to quaternary structure, heterotetramer of two alpha chains and two epsilon chains in early embryonic hemoglobin Gower-2; two zeta chains and two epsilon chains in early embryonic hemoglobin Gower-1. In terms of tissue distribution, red blood cells.

In terms of biological role, the epsilon chain is a beta-type chain of early mammalian embryonic hemoglobin. This is Hemoglobin subunit epsilon (HBE1) from Callithrix geoffroyi (Geoffroy's marmoset).